A 182-amino-acid chain; its full sequence is UPF0316 protein BCB4264_A3368 (182 aa).

3 consecutive transmembrane segments (helical) span residues 6–26 (LIFV…ILLV), 32–52 (SAAG…GIVF), and 58–78 (WMNI…GGYI).

This sequence belongs to the UPF0316 family.

The protein resides in the cell membrane. The chain is UPF0316 protein BCB4264_A3368 from Bacillus cereus (strain B4264).